The sequence spans 338 residues: Clavatol oxidase claD (338 aa).

The 107-residue stretch at 193–299 (DPMSLLRLLH…RYSVVFFYDG (107 aa)) folds into the Fe2OG dioxygenase domain. Fe cation-binding residues include His222, Asp224, and His280. A 2-oxoglutarate-binding site is contributed by Arg290.

It belongs to the iron/ascorbate-dependent oxidoreductase family. It depends on Fe(2+) as a cofactor.

The catalysed reaction is clavatol + 2-oxoglutarate + O2 = hydroxyclavatol + succinate + CO2. The protein operates within secondary metabolite biosynthesis. 2-oxoglutarate-dependent dioxygenase; part of the cla gene cluster that produces clavatol and ortho-quinone methide. The clavatol biosynthesis cluster cla and the terrestric acid cluster tra are both involved in the production of peniphenones and penilactones. The non-reducing PKS claF is responsible for the formation of clavatol from successive condensations of 3 malonyl-CoA units, presumably with a simple acetyl-CoA starter unit, and 2 methylation steps. The esterase claE probably collaborates with claF by catalyzing the hydrolysis of ACP-bound acyl intermediates to free the ACP from stalled intermediates. The clavatol oxidase claD then converts clavatol to hydroxyclavatol. Spontaneous dehydration of hydroxyclavatol leads to the accumulation of the highly active ortho-quinone methide. On the other hand, the PKS-NRPS hybrid traA is involved in the formation of crustosic acid, with the help of traB and traD. The polyketide synthase module (PKS) of traA is responsible for the synthesis of the polyketide backbone via the condensation of an acetyl-CoA starter unit with 3 malonyl-CoA units. The downstream nonribosomal peptide synthetase (NRPS) module then amidates the carboxyl end of the polyketide with L-malic acid. Because traA lacks a designated enoylreductase (ER) domain, the required activity is provided the enoyl reductase traG. Crustosic acid undergoes decarboxylation and isomerization to the terrestric acid, catalyzed by the 2-oxoglutarate-dependent dioxygenase traH. Both acids are further converted to the 2 gamma-butyrolactones (R)-5-methyltetronic acid and (S)-5-carboxylmethyltetronic acid, with involvement of the cytochrome P450 monooxygenase claJ. Spontaneous addition of the methide to these gamma-butyrolactones leads to peniphenone D and penilactone D, which undergo again stereospecific attacking by methide to give penilactones A and B. The chain is Clavatol oxidase claD from Penicillium crustosum (Blue mold fungus).